The chain runs to 209 residues: Auxin-binding protein ABP19a (209 aa).

An N-terminal signal peptide occupies residues 1–18 (MIFPIFFTFFLLLSSSHA). Cys-24 and Cys-39 form a disulfide bridge. The 147-residue stretch at 53-199 (SGLGIAGNTT…TTFLDAAQIK (147 aa)) folds into the Cupin type-1 domain. N-linked (GlcNAc...) asparagine glycosylation is present at Asn-60. 4 residues coordinate Mn(2+): His-101, His-103, Glu-108, and His-147.

Belongs to the germin family. As to quaternary structure, interacts with ABP20.

Its subcellular location is the secreted. It is found in the extracellular space. It localises to the apoplast. The protein localises to the cell wall. In terms of biological role, probable receptor for the plant growth-promoting hormone auxin. This chain is Auxin-binding protein ABP19a (ABP19A), found in Prunus persica (Peach).